The following is a 166-amino-acid chain: Transcription factor HES-5 (166 aa).

Positions 16–72 (KNRLRKPVVEKMRRDRINSSIEQLKLLLEQEFARHQPNSKLEKADILEMAVSYLKHS) constitute a bHLH domain. Residues 88 to 119 (YSEGYSWCLQEAVQFLTLHAASDTQMKLLYHF) form the Orange domain. Residues 125–144 (APAAPAKEPKAPGAAPPPAL) form a disordered region. The WRPW motif signature appears at 163–166 (WRPW).

In terms of assembly, transcription repression requires formation of a complex with a corepressor protein of the Groucho/TLE family. As to expression, expressed in fetal heart and brain tumors.

The protein resides in the nucleus. Transcriptional repressor of genes that require a bHLH protein for their transcription. Plays an important role as neurogenesis negative regulator. The polypeptide is Transcription factor HES-5 (HES5) (Homo sapiens (Human)).